An 840-amino-acid chain; its full sequence is Microcephalin (840 aa).

The 93-residue stretch at 1–93 (MAAHILKDVV…AHIDESLFPA (93 aa)) folds into the BRCT 1 domain. The disordered stretch occupies residues 184–206 (KEKRENLSPSSSQMIQQSHDNPS). Residues 190 to 206 (LSPSSSQMIQQSHDNPS) are compositionally biased toward polar residues. Residues Ser279, Ser287, Ser296, and Ser333 each carry the phosphoserine modification. 2 disordered regions span residues 313 to 379 (PDQK…SIRR) and 418 to 437 (PDNL…QLPS). Thr335 carries the phosphothreonine modification. Residues 355 to 378 (KRQRVSHGSHSPSKGKSKRKRSIR) are compositionally biased toward basic residues. Residues 427–437 (ENLPPTSQLPS) show a composition bias toward polar residues. Ser552 bears the Phosphoserine mark. Residues 562 to 586 (LKSTQNKGTTSKISNSSEGEAQSEH) form a disordered region. Residues 563–581 (KSTQNKGTTSKISNSSEGE) are compositionally biased toward polar residues. 2 BRCT domains span residues 644–734 (SGRG…PFEL) and 755–837 (YRGT…NYLL).

As to quaternary structure, interacts with CDC27 and maybe other components of the APC/C complex. Interacts with histone variant H2AX under DNA damage conditions.

Its subcellular location is the cytoplasm. It is found in the cytoskeleton. The protein localises to the microtubule organizing center. It localises to the centrosome. In terms of biological role, implicated in chromosome condensation and DNA damage induced cellular responses. May play a role in neurogenesis and regulation of the size of the cerebral cortex. This chain is Microcephalin, found in Hylobates lar (Lar gibbon).